Reading from the N-terminus, the 451-residue chain is Trigger factor (451 aa).

In terms of domain architecture, PPIase FKBP-type spans 173-258 (GDRVTLDFVG…LKKIEWAHLP (86 aa)).

The protein belongs to the FKBP-type PPIase family. Tig subfamily.

It localises to the cytoplasm. The catalysed reaction is [protein]-peptidylproline (omega=180) = [protein]-peptidylproline (omega=0). In terms of biological role, involved in protein export. Acts as a chaperone by maintaining the newly synthesized protein in an open conformation. Functions as a peptidyl-prolyl cis-trans isomerase. The sequence is that of Trigger factor from Cupriavidus pinatubonensis (strain JMP 134 / LMG 1197) (Cupriavidus necator (strain JMP 134)).